A 282-amino-acid polypeptide reads, in one-letter code: Large ribosomal subunit protein uL4c (282 aa).

Residues 1 to 49 (MASSATAPNSLSFFSSSLFLSSSHQIPKTYISVSKLGSGRVSKPLSVSS) constitute a chloroplast transit peptide. The disordered stretch occupies residues 106-138 (EVRGGGIKPYSQKKTGHARRGSQRTPLRPGGGV).

It belongs to the universal ribosomal protein uL4 family. As to quaternary structure, part of the 50S ribosomal subunit.

The protein localises to the plastid. It is found in the chloroplast. Its function is as follows. This protein binds directly and specifically to 23S rRNA. May play a role in plastid transcriptional regulation. The polypeptide is Large ribosomal subunit protein uL4c (RPL4) (Arabidopsis thaliana (Mouse-ear cress)).